Reading from the N-terminus, the 104-residue chain is Urease subunit beta (104 aa).

It belongs to the urease beta subunit family. In terms of assembly, heterotrimer of UreA (gamma), UreB (beta) and UreC (alpha) subunits. Three heterotrimers associate to form the active enzyme.

The protein localises to the cytoplasm. It catalyses the reaction urea + 2 H2O + H(+) = hydrogencarbonate + 2 NH4(+). It participates in nitrogen metabolism; urea degradation; CO(2) and NH(3) from urea (urease route): step 1/1. This is Urease subunit beta from Mycolicibacterium vanbaalenii (strain DSM 7251 / JCM 13017 / BCRC 16820 / KCTC 9966 / NRRL B-24157 / PYR-1) (Mycobacterium vanbaalenii).